A 509-amino-acid polypeptide reads, in one-letter code: Transcription factor SOX-9 (509 aa).

2 disordered regions span residues 1 to 66 (MNLL…ESEE) and 160 to 271 (RLRV…IDFR). Over residues 27 to 41 (SEGSRGSPCPSGSGS) the composition is skewed to low complexity. Positions 42-52 (DTENTRPQENT) are enriched in polar residues. Basic and acidic residues-rich tracts occupy residues 56–66 (GEPDLKKESEE) and 160–174 (RLRV…DYKY). Residues 63–103 (ESEEDKFPVCIREAVSQVLKGYDWTLVPMPVRVNGSSKNKP) form a dimerization (DIM) region. Positions 63-103 (ESEEDKFPVCIREAVSQVLKGYDWTLVPMPVRVNGSSKNKP) are PQA. S64 carries the post-translational modification Phosphoserine. The HMG box DNA-binding region spans 105 to 173 (VKRPMNAFMV…QHKKDHPDYK (69 aa)). S211 bears the Phosphoserine mark. The segment at 224-307 (PGEHSGQSQG…LPPNGHPGVP (84 aa)) is transactivation domain (TAM). Short sequence motifs (9aaTAD) lie at residues 275–284 (IGELSSDVIS) and 290–298 (DVNEFDQYL). Disordered regions lie at residues 335 to 415 (WMSK…QHSP) and 420 to 439 (YSPF…TRSQ). Pro residues predominate over residues 341-359 (APPPPPHPPQQPPPVPQAP). Over residues 360-369 (AQPQAALPQQ) the composition is skewed to low complexity. The span at 380–415 (HTLTTLSSEPGQSQRTHIKTEQLSPSHYSEQQQHSP) shows a compositional bias: polar residues. Positions 394–509 (RTHIKTEQLS…QPVYTQLTRP (116 aa)) are transactivation domain (TAC). Residue K398 forms a Glycyl lysine isopeptide (Lys-Gly) (interchain with G-Cter in ubiquitin) linkage. The 9aaTAD 3 signature appears at 460–468 (SVLYSTFTY). The disordered stretch occupies residues 479–509 (PIADTSGVPSIPQTHSPQHWEQPVYTQLTRP). Residues 485–509 (GVPSIPQTHSPQHWEQPVYTQLTRP) show a composition bias toward polar residues.

As to quaternary structure, homodimer; homodimerization is required for activity. Interacts (via C-terminus) with ZNF219; forming a complex that binds to the COL2A1 promoter and activates COL2A1 expression. Interacts with DDRGK1. Interacts with EP300/p300. Interacts with beta-catenin (CTNNB1); inhibiting CTNNB1 activity by competing with the binding sites of TCF/LEF within CTNNB1. Acetylated; acetylation impairs nuclear localization and ability to transactivate expression of target genes. Deacetylated by SIRT1. Post-translationally, phosphorylation at Ser-64 and Ser-211 by PKA increases transcriptional activity and may help delay chondrocyte maturation downstream of PTHLH/PTHrP signaling. Phosphorylation at either Ser-64 or Ser-211 is required for sumoylation, but phosphorylation is not dependent on sumoylation. Phosphorylated on tyrosine residues; tyrosine dephosphorylation by PTPN11/SHP2 blocks SOX9 phosphorylation by PKA and subsequent SUMOylation. In terms of processing, sumoylated; phosphorylation at either Ser-64 or Ser-211 is required for sumoylation. Sumoylation is induced by BMP signaling pathway. Ubiquitinated; ubiquitination leads to proteasomal degradation and is negatively regulated by DDRGK1.

It is found in the nucleus. Functionally, transcription factor that plays a key role in chondrocytes differentiation and skeletal development. Specifically binds the 5'-ACAAAG-3' DNA motif present in enhancers and super-enhancers and promotes expression of genes important for chondrogenesis, including cartilage matrix protein-coding genes COL2A1, COL4A2, COL9A1, COL11A2 and ACAN, SOX5 and SOX6. Also binds to some promoter regions. Plays a central role in successive steps of chondrocyte differentiation. Absolutely required for precartilaginous condensation, the first step in chondrogenesis during which skeletal progenitors differentiate into prechondrocytes. Together with SOX5 and SOX6, required for overt chondrogenesis when condensed prechondrocytes differentiate into early stage chondrocytes, the second step in chondrogenesis. Later, required to direct hypertrophic maturation and block osteoblast differentiation of growth plate chondrocytes: maintains chondrocyte columnar proliferation, delays prehypertrophy and then prevents osteoblastic differentiation of chondrocytes by lowering beta-catenin (CTNNB1) signaling and RUNX2 expression. Also required for chondrocyte hypertrophy, both indirectly, by keeping the lineage fate of chondrocytes, and directly, by remaining present in upper hypertrophic cells and transactivating COL10A1 along with MEF2C. Low lipid levels are the main nutritional determinant for chondrogenic commitment of skeletal progenitor cells: when lipids levels are low, FOXO (FOXO1 and FOXO3) transcription factors promote expression of SOX9, which induces chondrogenic commitment and suppresses fatty acid oxidation. Mechanistically, helps, but is not required, to remove epigenetic signatures of transcriptional repression and deposit active promoter and enhancer marks at chondrocyte-specific genes. Acts in cooperation with the Hedgehog pathway-dependent GLI (GLI1 and GLI3) transcription factors. In addition to cartilage development, also acts as a regulator of proliferation and differentiation in epithelial stem/progenitor cells: involved in the lung epithelium during branching morphogenesis, by balancing proliferation and differentiation and regulating the extracellular matrix. Controls epithelial branching during kidney development. In Sus scrofa (Pig), this protein is Transcription factor SOX-9 (SOX9).